A 169-amino-acid polypeptide reads, in one-letter code: ATP synthase subunit b, sodium ion specific (169 aa).

Residues 5 to 27 (SFISLDWGVVFQIVNTIVMYLIL) traverse the membrane as a helical segment.

Belongs to the ATPase B chain family. In terms of assembly, F-type ATPases have 2 components, F(1) - the catalytic core - and F(0) - the membrane proton channel. F(1) has five subunits: alpha(3), beta(3), gamma(1), delta(1), epsilon(1). F(0) has three main subunits: a(1), b(2) and c(10-14). The alpha and beta chains form an alternating ring which encloses part of the gamma chain. F(1) is attached to F(0) by a central stalk formed by the gamma and epsilon chains, while a peripheral stalk is formed by the delta and b chains.

It localises to the cell membrane. F(1)F(0) ATP synthase produces ATP from ADP in the presence of a proton or sodium gradient. F-type ATPases consist of two structural domains, F(1) containing the extramembraneous catalytic core and F(0) containing the membrane proton channel, linked together by a central stalk and a peripheral stalk. During catalysis, ATP synthesis in the catalytic domain of F(1) is coupled via a rotary mechanism of the central stalk subunits to proton translocation. Functionally, component of the F(0) channel, it forms part of the peripheral stalk, linking F(1) to F(0). In terms of biological role, in this organism this enzyme may function as an ATP-driven Na(+) ion pump to generate a Na(+) ion electrochemical gradient rather than as an ATP synthase. The sequence is that of ATP synthase subunit b, sodium ion specific (atpF) from Clostridium paradoxum.